The chain runs to 427 residues: UDP-N-acetyl-D-mannosamine dehydrogenase (427 aa).

Residues Y19, I20, D39, R44, T91, and T130 each contribute to the NAD(+) site. UDP-N-acetyl-alpha-D-mannosaminouronate contacts are provided by R155, V156, K207, N211, R214, H245, R247, and G258. K207 serves as the catalytic Proton donor/acceptor. The active-site Nucleophile is C261. Residues Y318 and K319 each coordinate UDP-N-acetyl-alpha-D-mannosaminouronate. R326 contributes to the NAD(+) binding site. K404 lines the UDP-N-acetyl-alpha-D-mannosaminouronate pocket.

It belongs to the UDP-glucose/GDP-mannose dehydrogenase family. Homotetramer; probably dimer of dimers.

It carries out the reaction UDP-N-acetyl-alpha-D-mannosamine + 2 NAD(+) + H2O = UDP-N-acetyl-alpha-D-mannosaminouronate + 2 NADH + 3 H(+). Catalyzes the four-electron oxidation of UDP-N-acetyl-D-mannosamine (UDP-ManNAc), reducing NAD(+) and releasing UDP-N-acetylmannosaminuronic acid (UDP-ManNAcA). The polypeptide is UDP-N-acetyl-D-mannosamine dehydrogenase (wecC) (Methanococcus vannielii (strain ATCC 35089 / DSM 1224 / JCM 13029 / OCM 148 / SB)).